A 263-amino-acid chain; its full sequence is MPEGPEIRRAADNLEAAIKGKPLTDVWFAFAQLKPYESQLTGQIVTRIETRGKALLTHFSNGLTLYSHNQLYGVWRVIDTGEIPKTTRILRVRLQTADKTILLYSASDIEMLTAEQLTTHPFLQRVGPDVLDARLTPEEVKARLLSPRFRNRQFSGLLLDQAFLAGLGNYLRVEILWQVGLTGQHKAKDLNEAQLNALSHALLDIPRLSYTTRGQADENKHHGALFRFKVFHRDGEACERCGGIIEKTTLSSRPFYWCPHCQK.

Proline 2 acts as the Schiff-base intermediate with DNA in catalysis. Catalysis depends on glutamate 3, which acts as the Proton donor. Lysine 53 serves as the catalytic Proton donor; for beta-elimination activity. The DNA site is built by glutamine 70, arginine 125, and asparagine 169. The FPG-type zinc-finger motif lies at 229-263; the sequence is KVFHRDGEACERCGGIIEKTTLSSRPFYWCPHCQK. Arginine 253 acts as the Proton donor; for delta-elimination activity in catalysis.

Belongs to the FPG family. It depends on Zn(2+) as a cofactor.

The catalysed reaction is 2'-deoxyribonucleotide-(2'-deoxyribose 5'-phosphate)-2'-deoxyribonucleotide-DNA = a 3'-end 2'-deoxyribonucleotide-(2,3-dehydro-2,3-deoxyribose 5'-phosphate)-DNA + a 5'-end 5'-phospho-2'-deoxyribonucleoside-DNA + H(+). Involved in base excision repair of DNA damaged by oxidation or by mutagenic agents. Acts as a DNA glycosylase that recognizes and removes damaged bases. Has a preference for oxidized pyrimidines, such as thymine glycol, 5,6-dihydrouracil and 5,6-dihydrothymine. Has AP (apurinic/apyrimidinic) lyase activity and introduces nicks in the DNA strand. Cleaves the DNA backbone by beta-delta elimination to generate a single-strand break at the site of the removed base with both 3'- and 5'-phosphates. The sequence is that of Endonuclease 8 from Salmonella agona (strain SL483).